Consider the following 475-residue polypeptide: Ataxin-10 (475 aa).

Omega-N-methylarginine is present on Arg-10. Phosphoserine is present on residues Ser-12 and Ser-77. Residue Thr-82 is modified to Phosphothreonine. At Ser-430 the chain carries Phosphoserine.

This sequence belongs to the ataxin-10 family. Homooligomer. Interacts with GNB2. Interacts with IQCB1. Interacts with OGT. Polyubiquitinated. Post-translationally, phosphorylation at Ser-12 by AURKB promotes the association of ATXN10 with PLK1. Phosphorylation at Ser-77 and Thr-82 by PLK1 may play a role in the regulation of cytokinesis and may stimulate the proteasome-mediated degradation of ATXN10. As to expression, ubiquitous distribution. Markedly increased expression in testis, adrenals, and brain.

It is found in the cytoplasm. It localises to the perinuclear region. The protein resides in the midbody. The protein localises to the cytoskeleton. Its subcellular location is the cilium basal body. It is found in the microtubule organizing center. It localises to the centrosome. The protein resides in the centriole. In terms of biological role, may play a role in the regulation of cytokinesis. May play a role in signaling by stimulating protein glycosylation. Induces neuritogenesis by activating the Ras-MAP kinase pathway and is necessary for the survival of cerebellar neurons. Does not appear to play a major role in ciliogenesis. The chain is Ataxin-10 (Atxn10) from Rattus norvegicus (Rat).